The chain runs to 188 residues: GTPase KRas (188 aa).

Residues 10–18 (GAGGVGKSA), 29–35 (VDEYDPT), 59–60 (AG), and 116–119 (NKCD) each bind GTP. An Effector region motif is present at residues 32 to 40 (YDPTIEDSY). The tract at residues 167 to 188 (KEKMSKEGKKKKKKSKTKCILM) is disordered. The residue at position 185 (Cys-185) is a Cysteine methyl ester. Cys-185 carries S-farnesyl cysteine lipidation. The propeptide at 186–188 (ILM) is removed in mature form.

The protein belongs to the small GTPase superfamily. Ras family.

Its subcellular location is the cell membrane. It is found in the cytoplasm. It catalyses the reaction GTP + H2O = GDP + phosphate + H(+). With respect to regulation, alternates between an inactive form bound to GDP and an active form bound to GTP. Activated by a guanine nucleotide-exchange factor (GEF) and inactivated by a GTPase-activating protein (GAP). Functionally, ras proteins bind GDP/GTP and possess intrinsic GTPase activity. Plays an important role in the regulation of cell proliferation. This chain is GTPase KRas (kras1), found in Oryzias latipes (Japanese rice fish).